A 544-amino-acid polypeptide reads, in one-letter code: Secreted aspartic protease 9 (544 aa).

A signal peptide spans 1–17 (MRLNSVALLSLVATALA). A disordered region spans residues 31 to 50 (GESKDDLSPEDDSNPRFVKR). One can recognise a Peptidase A1 domain in the interval 65–479 (YMATLKIGSN…DLDDYEVSLA (415 aa)). 83–85 (DTG) is a binding site for pepstatin A. Cys98 and Cys195 are oxidised to a cystine. Residue Thr167 is part of the active site. Residues Asn212, Asn240, and Asn252 are each glycosylated (N-linked (GlcNAc...) asparagine). The active site involves Asp371. Pepstatin A is bound at residue 371–375 (DTGST). An intrachain disulfide couples Cys406 to Cys441. Residues Asn422 and Asn499 are each glycosylated (N-linked (GlcNAc...) asparagine). The interval 500–520 (SSGSGTTSSSGTSTSTSTRHS) is disordered.

This sequence belongs to the peptidase A1 family. Monomer. In terms of processing, the GPI-anchor is attached to the protein in the endoplasmic reticulum and serves to target the protein to the cell surface. There, the glucosamine-inositol phospholipid moiety is cleaved off and the GPI-modified mannoprotein is covalently attached via its lipidless GPI glycan remnant to the 1,6-beta-glucan of the outer cell wall layer.

The protein localises to the cell membrane. It is found in the secreted. It localises to the cell wall. The catalysed reaction is Preferential cleavage at the carboxyl of hydrophobic amino acids, but fails to cleave 15-Leu-|-Tyr-16, 16-Tyr-|-Leu-17 and 24-Phe-|-Phe-25 of insulin B chain. Activates trypsinogen, and degrades keratin.. Functionally, secreted aspartic peptidases (SAPs) are a group of ten acidic hydrolases considered as key virulence factors. These enzymes supply the fungus with nutrient amino acids as well as are able to degrade the selected host's proteins involved in the immune defense. Moreover, acts toward human hemoglobin though limited proteolysis to generate a variety of antimicrobial hemocidins, enabling to compete with the other microorganisms of the same physiological niche using the microbicidal peptides generated from the host protein. Plays a key role in defense against host by cleaving histatin-5 (Hst 5), a peptide from human saliva that carries out fungicidal activity. The cleavage rate decreases in an order of SAP2 &gt; SAP9 &gt; SAP3 &gt; SAP7 &gt; SAP4 &gt; SAP1 &gt; SAP8. The first cleavage occurs between residues 'Lys-17' and 'His-18' of Hst 5, giving DSHAKRHHGYKRKFHEK and HHSHRGY peptides. Simultaneously, the DSHAKRHHGYKRK peptide is also formed. Further fragmentation by SAP9 results in FHEK product. This is Secreted aspartic protease 9 from Candida albicans (Yeast).